Reading from the N-terminus, the 181-residue chain is Ribonuclease HII (181 aa).

In terms of domain architecture, RNase H type-2 spans 1 to 181; it reads MICGIDEVGR…NLHRRSFKFI (181 aa). 3 residues coordinate a divalent metal cation: Asp-6, Glu-7, and Asp-98.

Belongs to the RNase HII family. The cofactor is Mn(2+). Requires Mg(2+) as cofactor.

The protein resides in the cytoplasm. The enzyme catalyses Endonucleolytic cleavage to 5'-phosphomonoester.. Its function is as follows. Endonuclease that specifically degrades the RNA of RNA-DNA hybrids. In Borrelia hermsii (strain HS1 / DAH), this protein is Ribonuclease HII.